The sequence spans 387 residues: Succinyl-diaminopimelate desuccinylase (387 aa).

Residue H74 participates in Zn(2+) binding. D76 is a catalytic residue. D107 is a Zn(2+) binding site. The active-site Proton acceptor is E142. Residues E143, E171, and H360 each coordinate Zn(2+).

This sequence belongs to the peptidase M20A family. DapE subfamily. Homodimer. The cofactor is Zn(2+). Co(2+) serves as cofactor.

It carries out the reaction N-succinyl-(2S,6S)-2,6-diaminopimelate + H2O = (2S,6S)-2,6-diaminopimelate + succinate. The protein operates within amino-acid biosynthesis; L-lysine biosynthesis via DAP pathway; LL-2,6-diaminopimelate from (S)-tetrahydrodipicolinate (succinylase route): step 3/3. Catalyzes the hydrolysis of N-succinyl-L,L-diaminopimelic acid (SDAP), forming succinate and LL-2,6-diaminopimelate (DAP), an intermediate involved in the bacterial biosynthesis of lysine and meso-diaminopimelic acid, an essential component of bacterial cell walls. This is Succinyl-diaminopimelate desuccinylase from Rhodopseudomonas palustris (strain ATCC BAA-98 / CGA009).